The primary structure comprises 654 residues: Translation factor GUF1, mitochondrial (654 aa).

A tr-type G domain is found at 57–237 (ENYRNFSIVA…SVIKNIPSPV (181 aa)). GTP is bound by residues 66–73 (AHVDHGKS), 130–134 (DTPGH), and 184–187 (NKID).

It belongs to the TRAFAC class translation factor GTPase superfamily. Classic translation factor GTPase family. LepA subfamily.

The protein localises to the mitochondrion inner membrane. It catalyses the reaction GTP + H2O = GDP + phosphate + H(+). Its function is as follows. Promotes mitochondrial protein synthesis. May act as a fidelity factor of the translation reaction, by catalyzing a one-codon backward translocation of tRNAs on improperly translocated ribosomes. Binds to mitochondrial ribosomes in a GTP-dependent manner. The sequence is that of Translation factor GUF1, mitochondrial from Candida albicans (strain WO-1) (Yeast).